The chain runs to 252 residues: NAP1-related protein 2 (252 aa).

Over residues 1–15 the composition is skewed to basic and acidic residues; sequence MTAPADKGKKAKTDA. A disordered region spans residues 1–23; the sequence is MTAPADKGKKAKTDADGGAAEEN. Residues 26–67 are a coiled coil; the sequence is IDGALVLSIEKLQEIQDELEKVNEEASDKVLEVEQKYSEIRR. The segment at 222-252 is disordered; sequence YFNNEAEELGEDDDEEGSDADEGEEDEEEEN. The segment covering 226–252 has biased composition (acidic residues); sequence EAEELGEDDDEEGSDADEGEEDEEEEN.

It belongs to the nucleosome assembly protein (NAP) family.

It is found in the nucleus. Its subcellular location is the cytoplasm. Acts as a histone H2A/H2B chaperone in nucleosome assembly. This Oryza sativa subsp. indica (Rice) protein is NAP1-related protein 2.